An 82-amino-acid polypeptide reads, in one-letter code: ATP synthase subunit c (82 aa).

The next 2 membrane-spanning stretches (helical) occupy residues 6-26 (LGLT…GCGI) and 49-69 (IMVT…YALV).

The protein belongs to the ATPase C chain family. In terms of assembly, F-type ATPases have 2 components, F(1) - the catalytic core - and F(0) - the membrane proton channel. F(1) has five subunits: alpha(3), beta(3), gamma(1), delta(1), epsilon(1). F(0) has three main subunits: a(1), b(2) and c(10-14). The alpha and beta chains form an alternating ring which encloses part of the gamma chain. F(1) is attached to F(0) by a central stalk formed by the gamma and epsilon chains, while a peripheral stalk is formed by the delta and b chains.

Its subcellular location is the cell inner membrane. Functionally, f(1)F(0) ATP synthase produces ATP from ADP in the presence of a proton or sodium gradient. F-type ATPases consist of two structural domains, F(1) containing the extramembraneous catalytic core and F(0) containing the membrane proton channel, linked together by a central stalk and a peripheral stalk. During catalysis, ATP synthesis in the catalytic domain of F(1) is coupled via a rotary mechanism of the central stalk subunits to proton translocation. Key component of the F(0) channel; it plays a direct role in translocation across the membrane. A homomeric c-ring of between 10-14 subunits forms the central stalk rotor element with the F(1) delta and epsilon subunits. The chain is ATP synthase subunit c from Nitratidesulfovibrio vulgaris (strain ATCC 29579 / DSM 644 / CCUG 34227 / NCIMB 8303 / VKM B-1760 / Hildenborough) (Desulfovibrio vulgaris).